A 646-amino-acid polypeptide reads, in one-letter code: Threonine--tRNA ligase (646 aa).

The TGS domain maps to 1 to 63; it reads MAQISLTFPD…EADAKIAIHT (63 aa). The segment at 247–544 is catalytic; that stretch reads DHRKLGKEME…LIENYAGKLP (298 aa). Zn(2+)-binding residues include Cys-344, His-395, and His-521.

The protein belongs to the class-II aminoacyl-tRNA synthetase family. Homodimer. Zn(2+) is required as a cofactor.

Its subcellular location is the cytoplasm. It catalyses the reaction tRNA(Thr) + L-threonine + ATP = L-threonyl-tRNA(Thr) + AMP + diphosphate + H(+). Its function is as follows. Catalyzes the attachment of threonine to tRNA(Thr) in a two-step reaction: L-threonine is first activated by ATP to form Thr-AMP and then transferred to the acceptor end of tRNA(Thr). Also edits incorrectly charged L-seryl-tRNA(Thr). This Cereibacter sphaeroides (strain ATCC 17025 / ATH 2.4.3) (Rhodobacter sphaeroides) protein is Threonine--tRNA ligase.